The chain runs to 143 residues: Nucleoside diphosphate kinase (143 aa).

6 residues coordinate ATP: lysine 11, phenylalanine 59, arginine 87, threonine 93, arginine 104, and asparagine 114. The active-site Pros-phosphohistidine intermediate is histidine 117.

The protein belongs to the NDK family. In terms of assembly, homotetramer. Mg(2+) is required as a cofactor.

It localises to the cytoplasm. It catalyses the reaction a 2'-deoxyribonucleoside 5'-diphosphate + ATP = a 2'-deoxyribonucleoside 5'-triphosphate + ADP. It carries out the reaction a ribonucleoside 5'-diphosphate + ATP = a ribonucleoside 5'-triphosphate + ADP. Major role in the synthesis of nucleoside triphosphates other than ATP. The ATP gamma phosphate is transferred to the NDP beta phosphate via a ping-pong mechanism, using a phosphorylated active-site intermediate. This chain is Nucleoside diphosphate kinase, found in Shewanella piezotolerans (strain WP3 / JCM 13877).